The following is a 336-amino-acid chain: Phospho-N-acetylmuramoyl-pentapeptide-transferase (336 aa).

The next 10 helical transmembrane spans lie at 3–23 (LTLIAAIISFMVSAFTMPYFI), 53–73 (GGTVFLLVATAVSLLVSLFSI), 78–98 (SLALISGILSIVVIYGIIGFL), 118–138 (LALQLAGGLMFYFLHVSPSGI), 143–163 (VFGYQLSLGIFYLFFVLFWVV), 174–194 (GIDGLASISVVISLVTYGVIA), 200–220 (FDVLLLIGTMIGALLGFFCFN), 226–246 (VFMGDVGSLALGAMLAAISIA), 254–274 (LIIGIVYVLETSSVMLQVFYF), and 316–336 (AFLWGVGSLASLLVLAILYVF).

It belongs to the glycosyltransferase 4 family. MraY subfamily. It depends on Mg(2+) as a cofactor.

The protein resides in the cell membrane. It catalyses the reaction UDP-N-acetyl-alpha-D-muramoyl-L-alanyl-gamma-D-glutamyl-L-lysyl-D-alanyl-D-alanine + di-trans,octa-cis-undecaprenyl phosphate = Mur2Ac(oyl-L-Ala-gamma-D-Glu-L-Lys-D-Ala-D-Ala)-di-trans,octa-cis-undecaprenyl diphosphate + UMP. Its pathway is cell wall biogenesis; peptidoglycan biosynthesis. Its function is as follows. Catalyzes the initial step of the lipid cycle reactions in the biosynthesis of the cell wall peptidoglycan: transfers peptidoglycan precursor phospho-MurNAc-pentapeptide from UDP-MurNAc-pentapeptide onto the lipid carrier undecaprenyl phosphate, yielding undecaprenyl-pyrophosphoryl-MurNAc-pentapeptide, known as lipid I. The sequence is that of Phospho-N-acetylmuramoyl-pentapeptide-transferase from Streptococcus pyogenes serotype M18 (strain MGAS8232).